Here is a 430-residue protein sequence, read N- to C-terminus: Maltoporin (430 aa).

An N-terminal signal peptide occupies residues Met1–Ala23.

The protein belongs to the porin LamB (TC 1.B.3) family. In terms of assembly, homotrimer formed of three 18-stranded antiparallel beta-barrels, containing three independent channels.

It localises to the cell outer membrane. The enzyme catalyses beta-maltose(in) = beta-maltose(out). In terms of biological role, involved in the transport of maltose and maltodextrins. The chain is Maltoporin from Actinobacillus succinogenes (strain ATCC 55618 / DSM 22257 / CCUG 43843 / 130Z).